The primary structure comprises 151 residues: 3-hydroxyacyl-[acyl-carrier-protein] dehydratase FabZ (151 aa).

Histidine 54 is an active-site residue.

Belongs to the thioester dehydratase family. FabZ subfamily.

The protein resides in the cytoplasm. The catalysed reaction is a (3R)-hydroxyacyl-[ACP] = a (2E)-enoyl-[ACP] + H2O. Involved in unsaturated fatty acids biosynthesis. Catalyzes the dehydration of short chain beta-hydroxyacyl-ACPs and long chain saturated and unsaturated beta-hydroxyacyl-ACPs. The chain is 3-hydroxyacyl-[acyl-carrier-protein] dehydratase FabZ from Blochmanniella floridana.